A 1023-amino-acid polypeptide reads, in one-letter code: Sodium/potassium-transporting ATPase subunit alpha-1 (1023 aa).

Positions 1 to 5 (MGKGV) are excised as a propeptide. Positions 1–11 (MGKGVGRDKYE) are enriched in basic and acidic residues. The segment at 1-38 (MGKGVGRDKYEPAAVSEHGDKKGKKAKKERDMDELKKE) is disordered. The Cytoplasmic portion of the chain corresponds to 6–87 (GRDKYEPAAV…NALTPPPTTP (82 aa)). Position 9 is an N6-acetyllysine (lysine 9). Tyrosine 10 is modified (phosphotyrosine). Serine 16 is modified (phosphoserine; by PKC). At lysine 21 the chain carries N6-acetyllysine. Residues 28–38 (KERDMDELKKE) are compositionally biased toward basic and acidic residues. A phosphoserine mark is found at serine 40 and serine 47. The segment at 82–84 (PPP) is phosphoinositide-3 kinase binding. The chain crosses the membrane as a helical span at residues 88-108 (EWVKFCRQLFGGFSMLLWIGA). Topologically, residues 109–131 (ILCFLAYGILAATEEDFDNDNLY) are extracellular. Residues 132-152 (LGVVLAAVVIITGCFSYYQEA) traverse the membrane as a helical segment. The Cytoplasmic portion of the chain corresponds to 153–288 (KSSKIMESFK…GGQTPIAAEI (136 aa)). A disordered region spans residues 216-235 (SSLTGESEPQTRSPDFTNEN). A Phosphoserine modification is found at serine 228. The residue at position 260 (tyrosine 260) is a Phosphotyrosine. Residues 289–308 (EHFIHIITGVAVFLGVSFFI) traverse the membrane as a helical segment. At 309–320 (LSLILEYTWLEA) the chain is on the extracellular side. The helical transmembrane segment at 321 to 338 (VIFLIGIIVANVPEGLLA) threads the bilayer. Residues 339–772 (TVTVCLTLTA…EEGRLIFDNL (434 aa)) lie on the Cytoplasmic side of the membrane. Aspartate 376 serves as the catalytic 4-aspartylphosphate intermediate. Phosphoserine is present on residues serine 452 and serine 484. Residue lysine 487 participates in ATP binding. Residue tyrosine 542 is modified to Phosphotyrosine. The segment at 596 to 717 (RAAVPDAVGK…QGAIVAVTGD (122 aa)) is mediates interaction with SCN7A. Residue lysine 661 is modified to N6-succinyllysine. Residues serine 668 and serine 675 each carry the phosphoserine modification. Residues aspartate 717 and aspartate 721 each contribute to the Mg(2+) site. The chain crosses the membrane as a helical span at residues 773–792 (KKSIAYTLTSNIPEITPFLI). Over 793 to 802 (FIIANIPLPL) the chain is Extracellular. A helical transmembrane segment spans residues 803 to 823 (GTVTILCIDLGTDMVPAISLA). Residues 824–843 (YEQAESDIMKRQPRNPKTDK) lie on the Cytoplasmic side of the membrane. Residues 844–866 (LVNERLISMAYGQIGMIQALGGF) form a helical membrane-spanning segment. Residues 867–918 (FTYFVILAENGFLPFHLLGIRVDWDDRWINDVEDSYGQQWTYEQRKIVEFTC) are Extracellular-facing. The helical transmembrane segment at 919–938 (HTAFFVSIVVVQWADLVICK) threads the bilayer. Residues 939–951 (TRRNSVFQQGMKN) are Cytoplasmic-facing. Phosphoserine; by PKA is present on serine 943. The helical transmembrane segment at 952-970 (KILIFGLFEETALAAFLSY) threads the bilayer. Topologically, residues 971–985 (CPGMGVALRMYPLKP) are extracellular. A helical membrane pass occupies residues 986 to 1006 (TWWFCAFPYSLLIFVYDEIRK). At 1007–1023 (LIIRRRPGGWVEKETYY) the chain is on the cytoplasmic side.

The protein belongs to the cation transport ATPase (P-type) (TC 3.A.3) family. Type IIC subfamily. In terms of assembly, the sodium/potassium-transporting ATPase is composed of a catalytic alpha subunit, an auxiliary non-catalytic beta subunit and an additional regulatory subunit. Interacts with regulatory subunit FXYD1. Interacts with regulatory subunit FXYD3. Interacts with SIK1. Interacts with SLC35G1 and STIM1. Interacts with CLN3; this interaction regulates the sodium/potassium-transporting ATPase complex localization at the plasma membrane. Interacts with SCN7A; activates ATP1A1 P-type sodium:potassium-exchanging transporter activity which indirectly signals to nearby neurons to regulate sodium homeostasis. In terms of processing, phosphorylation on Tyr-10 modulates pumping activity. Phosphorylation of Ser-943 by PKA modulates the response of ATP1A1 to PKC. Dephosphorylation by protein phosphatase 2A (PP2A) following increases in intracellular sodium, leading to increase catalytic activity. As to expression, expressed in endocardial endothelial cells.

The protein resides in the cell membrane. Its subcellular location is the basolateral cell membrane. It localises to the sarcolemma. It is found in the cell projection. The protein localises to the axon. The protein resides in the melanosome. It catalyses the reaction K(+)(out) + Na(+)(in) + ATP + H2O = K(+)(in) + Na(+)(out) + ADP + phosphate + H(+). In terms of biological role, this is the catalytic component of the active enzyme, which catalyzes the hydrolysis of ATP coupled with the exchange of sodium and potassium ions across the plasma membrane. This action creates the electrochemical gradient of sodium and potassium ions, providing the energy for active transport of various nutrients. Could also be part of an osmosensory signaling pathway that senses body-fluid sodium levels and controls salt intake behavior as well as voluntary water intake to regulate sodium homeostasis. The polypeptide is Sodium/potassium-transporting ATPase subunit alpha-1 (ATP1A1) (Oryctolagus cuniculus (Rabbit)).